We begin with the raw amino-acid sequence, 2792 residues long: E3 ubiquitin-protein ligase UBR5 (2792 aa).

Position 2 is an N-acetylthreonine (Thr-2). Residues 77–88 (DRLELGKPDNND) are compositionally biased toward basic and acidic residues. The segment at 77-175 (DRLELGKPDN…DRGSGLLGSQ (99 aa)) is disordered. The span at 94–111 (SSSGTGRTSRPGRTSDSP) shows a compositional bias: low complexity. A Phosphoserine modification is found at Ser-110. Residues 135–144 (GVGGSGGGSS) show a composition bias toward gly residues. The UBA domain maps to 184–226 (VIPEELISQAQVVLQGKSRSVIIRELQRTNLDVNLAVNNLLSR). Phosphoserine is present on Ser-321. Over residues 322–341 (FDNERGSTSKEGESNPDKKN) the composition is skewed to basic and acidic residues. The disordered stretch occupies residues 322–347 (FDNERGSTSKEGESNPDKKNTPVQSP). Phosphoserine is present on residues Ser-346 and Ser-572. The span at 577 to 598 (KSMEKASKTLETKPESKQEPVK) shows a compositional bias: basic and acidic residues. A disordered region spans residues 577 to 642 (KSMEKASKTL…APREEEKVNE (66 aa)). The residue at position 606 (Ser-606) is a Phosphoserine. Over residues 608 to 622 (ASTCSDASSIASSAS) the composition is skewed to low complexity. Thr-631 bears the Phosphothreonine mark. A phosphoserine mark is found at Ser-802, Ser-922, and Ser-1012. Disordered regions lie at residues 993-1029 (AGLG…SMDP) and 1046-1069 (TAAT…EPSV). Over residues 1011-1027 (VSPPIAPPSWVPDPPSM) the composition is skewed to pro residues. Residues 1046–1067 (TAATGSGQGPSTSTIPGPSTEP) are compositionally biased toward polar residues. Phosphothreonine occurs at positions 1109 and 1129. A UBR-type zinc finger spans residues 1171-1239 (DTCSFTWTGA…EKCKCKTLIA (69 aa)). Ser-1221, Ser-1302, Ser-1349, Ser-1369, and Ser-1475 each carry phosphoserine. The disordered stretch occupies residues 1293 to 1312 (REDRNRKTASPEDSDMPDHD). Residues 1509–1734 (SVEPLPPRPS…PSSTSTPAAS (226 aa)) are disordered. Residues 1518–1531 (SSDQASSSSQSQSS) are compositionally biased toward low complexity. Polar residues predominate over residues 1532–1547 (YIIRNPQQRRISQSQP). Ser-1543 is subject to Phosphoserine. Acidic residues-rich tracts occupy residues 1553–1568 (EEQD…EVEV) and 1599–1608 (HDEDGSDMEL). A compositionally biased stretch (polar residues) spans 1623–1632 (NHSNQDNASG). Low complexity-rich tracts occupy residues 1635–1651 (SVVT…ASSV), 1662–1675 (SNDS…SSQS), and 1720–1734 (AAST…PAAS). Thr-1730 is subject to Phosphothreonine. Ser-1735 carries the post-translational modification Phosphoserine. A Phosphotyrosine modification is found at Tyr-1740. Ser-1774 is subject to Phosphoserine. Residues 1853-1884 (LASAGDPGHPNHPLHASQNSARRERMTAREEA) form a disordered region. The segment covering 1873 to 1884 (ARRERMTAREEA) has biased composition (basic and acidic residues). Position 1963 is a phosphothreonine (Thr-1963). Residues 1978–2015 (GIDNEDSEHENDDDTSQSATLNDKDDDSLPAETGQNHP) are disordered. Acidic residues predominate over residues 1979-1992 (IDNEDSEHENDDDT). 3 positions are modified to phosphoserine: Ser-1984, Ser-2020, and Ser-2022. Phosphothreonine is present on Thr-2024. Position 2070 is a phosphoserine (Ser-2070). Residues 2111 to 2137 (RQKKEGEEQSLLAEEADSSKPGPSAPD) form a disordered region. Residue Thr-2207 is modified to Phosphothreonine. Phosphoserine is present on residues Ser-2235 and Ser-2283. Residues 2317–2387 (HTSLMQRLRN…SDDPDPLPAH (71 aa)) form a disordered region. Composition is skewed to basic and acidic residues over residues 2326 to 2342 (NRGE…EMRR) and 2350 to 2362 (SRRD…RRQL). In terms of domain architecture, PABC spans 2371–2448 (PASEGNPSDD…AMELIIAHGR (78 aa)). The HECT domain maps to 2455 to 2792 (ILDLGLLDSS…AIKTKNFGFV (338 aa)). Phosphoserine is present on residues Ser-2463, Ser-2477, and Ser-2479. The disordered stretch occupies residues 2467 to 2494 (VQENRKRHGSSRSVVDMDLEDTDDGDDN). Positions 2483–2493 (MDLEDTDDGDD) are enriched in acidic residues. The active-site Glycyl thioester intermediate is the Cys-2761.

It belongs to the UBR5 family. In terms of assembly, homotetramer; composed of a dimer of dimers. Associates with CDK9 and TFIIS/TCEA1 and forms a transcription regulatory complex made of CDK9, RNAP II, UBR5 and TFIIS/TCEA1 that can stimulate target gene transcription (e.g. gamma fibrinogen/FGG) by recruiting their promoters. Associates with the E3 ligase complex containing DYRK2, EDD/UBR5, DDB1 and DCAF1 proteins (EDVP complex). Binds TOPBP1. Interacts with PIH1D1. Interacts with CIB1.

It localises to the nucleus. Its subcellular location is the cytoplasm. The catalysed reaction is S-ubiquitinyl-[E2 ubiquitin-conjugating enzyme]-L-cysteine + [acceptor protein]-L-lysine = [E2 ubiquitin-conjugating enzyme]-L-cysteine + N(6)-ubiquitinyl-[acceptor protein]-L-lysine.. Its pathway is protein modification; protein ubiquitination. In terms of biological role, E3 ubiquitin-protein ligase involved in different protein quality control pathways in the cytoplasm and nucleus. Mainly acts as a ubiquitin chain elongator that extends pre-ubiquitinated substrates. Component of the N-end rule pathway: ubiquitinates proteins bearing specific N-terminal residues that are destabilizing according to the N-end rule, leading to their degradation. Recognizes type-1 N-degrons, containing positively charged amino acids (Arg, Lys and His). Together with UBR4, part of a cytoplasm protein quality control pathway that prevents protein aggregation by catalyzing assembly of heterotypic 'Lys-11'-/'Lys-48'-linked branched ubiquitin chains on aggregated proteins, leading to substrate recognition by the segregase p97/VCP and degradation by the proteasome: UBR5 is probably branching multiple 'Lys-48'-linked chains of substrates initially modified with mixed conjugates by UBR4. Together with ITCH, catalyzes 'Lys-48'-/'Lys-63'-branched ubiquitination of TXNIP, leading to its degradation: UBR5 mediates branching of 'Lys-48'-linked chains of substrates initially modified with 'Lys-63'-linked conjugates by ITCH. Catalytic component of a nuclear protein quality control pathway that mediates ubiquitination and degradation of unpaired transcription factors (i.e. transcription factors that are not assembled into functional multiprotein complexes): specifically recognizes and binds degrons that are not accessible when transcription regulators are associated with their coactivators. Ubiquitinates various unpaired transcription regulator (MYC, SUPT4H1, SUPT5H, CDC20 and MCRS1), as well as ligand-bound nuclear receptors (ESR1, NR1H3, NR3C1, PGR, RARA, RXRA AND VDR) that are not associated with their nuclear receptor coactivators (NCOAs). Involved in maturation and/or transcriptional regulation of mRNA by mediating polyubiquitination and activation of CDK9. Also acts as a regulator of DNA damage response by acting as a suppressor of RNF168, an E3 ubiquitin-protein ligase that promotes accumulation of 'Lys-63'-linked histone H2A and H2AX at DNA damage sites, thereby acting as a guard against excessive spreading of ubiquitinated chromatin at damaged chromosomes. Regulates DNA topoisomerase II binding protein (TopBP1) in the DNA damage response. Ubiquitinates acetylated PCK1. Acts as a positive regulator of the canonical Wnt signaling pathway by mediating (1) ubiquitination and stabilization of CTNNB1, and (2) 'Lys-48'-linked ubiquitination and degradation of TLE3. Promotes disassembly of the mitotic checkpoint complex (MCC) from the APC/C complex by catalyzing ubiquitination of BUB1B, BUB3 and CDC20. Plays an essential role in extraembryonic development. Required for the maintenance of skeletal tissue homeostasis by acting as an inhibitor of hedgehog (HH) signaling. The polypeptide is E3 ubiquitin-protein ligase UBR5 (Mus musculus (Mouse)).